A 78-amino-acid polypeptide reads, in one-letter code: Beta-defensin 105A (78 aa).

An N-terminal signal peptide occupies residues M1–A27. Disulfide bonds link C43–C74, C53–C67, and C57–C73.

The protein belongs to the beta-defensin family.

The protein localises to the secreted. Has antimicrobial activity. This Pongo pygmaeus (Bornean orangutan) protein is Beta-defensin 105A (DEFB105A).